A 269-amino-acid chain; its full sequence is Acyl-CoA-binding domain-containing protein 4 (269 aa).

Residues 12–101 (CQKQFQAAVS…MKLVAQKVID (90 aa)) form the ACB domain. Residues 23 to 32 (IQNLPKNGSY), 43 to 47 (YSYYK), lysine 69, and tyrosine 88 contribute to the an acyl-CoA site. Disordered stretches follow at residues 150–175 (GAVS…PRDL), 195–226 (EQRA…QCSA), and 248–269 (VALP…SAAN). Over residues 156–167 (PCLPKEPAPPSP) the composition is skewed to pro residues. A phosphoserine mark is found at serine 166 and serine 171.

Functionally, binds medium- and long-chain acyl-CoA esters and may function as an intracellular carrier of acyl-CoA esters. The protein is Acyl-CoA-binding domain-containing protein 4 (ACBD4) of Pongo abelii (Sumatran orangutan).